A 552-amino-acid polypeptide reads, in one-letter code: Mothers against decapentaplegic homolog 4 (552 aa).

The tract at residues 1–322 (MDNMSITNTP…PISNHPAPEY (322 aa)) is mediates interaction with ZBTB7A. Residues 18-142 (SIVHSLMCHR…YERVVSPGID (125 aa)) form the MH1 domain. At lysine 37 the chain carries N6-acetyllysine. The interval 44–69 (VKKLKEKKDELDSLITAITTNGAHPS) is required for interaction with TSC22D1. A Zn(2+)-binding site is contributed by cysteine 71. Lysine 113 participates in a covalent cross-link: Glycyl lysine isopeptide (Lys-Gly) (interchain with G-Cter in SUMO2). Residues cysteine 115, cysteine 127, and histidine 132 each contribute to the Zn(2+) site. Disordered stretches follow at residues 168 to 194 (GQPS…STET) and 236 to 256 (GLLQ…FTGQ). Composition is skewed to polar residues over residues 170–194 (PSLS…STET) and 245–256 (QPGQQQNGFTGQ). The interval 275–320 (PYTPNLPHHQNGHLQHHPPMPPHPGHYWPVHNELAFQPPISNHPAP) is SAD. Positions 323–552 (WCSIAYFEMD…MPIADPQPLD (230 aa)) constitute an MH2 domain. N6-acetyllysine occurs at positions 428 and 507. Lysine 519 is covalently cross-linked (Glycyl lysine isopeptide (Lys-Gly) (interchain with G-Cter in ubiquitin)).

This sequence belongs to the dwarfin/SMAD family. In terms of assembly, monomer; in the absence of TGF-beta activation. Heterotrimer; on TGF-beta activation. Heterotrimer composed of two molecules of a C-terminally phosphorylated R-SMAD molecule, SMAD2 or SMAD3, and one molecule of SMAD4 to form the transcriptional active SMAD2/SMAD3-SMAD4 complex. Found in a ternary complex composed of SMAD4, STK11/LKB1 and STK11IP. Found in a complex with SMAD1 and YY1. Identified in a complex that contains at least ZNF451, SMAD2, SMAD3 and SMAD4. Interacts with ATF2, COPS5, DACH1, MSG1, SKI, STK11/LKB1, STK11IP and TRIM33. Associates with ZNF423 or ZNF521 in response to BMP2 leading to activate transcription of BMP target genes. Interacts with USP9X. Interacts (via the MH1 and MH2 domains) with RBPMS. Interacts with WWTR1 (via coiled-coil domain). Interacts with CITED1 and CITED2. Interacts with PDPK1 (via PH domain). Interacts with VPS39; this interaction affects heterodimer formation with SMAD3, but not with SMAD2, and leads to inhibition of SMAD3-dependent transcription activation. Interactions with VPS39 and SMAD2 may be mutually exclusive. Interacts (via MH2 domain) with ZNF451 (via N-terminal zinc-finger domains). Interacts with ZC3H3. Interacts weakly with ZNF8. Interacts with NUP93 and IPO7; translocates SMAD4 to the nucleus through the NPC upon BMP7 stimulation resulting in activation of SMAD4 signaling. Interacts with CREB3L1, the interaction takes place upon TGFB1 induction and SMAD4 acts as a CREB3L1 coactivator to induce the expression of genes involved in the assembly of collagen extracellular matrix. Interacts with DLX1. Interacts with ZBTB7A; the interaction is direct and stimulated by TGFB1. Interacts with CREBBP; the recruitment of this transcriptional coactivator is negatively regulated by ZBTB7A. Interacts with EP300; the interaction with this transcriptional coactivator is negatively regulated by ZBTB7A. Interacts with HDAC1. Interacts (via MH2 domain) with ZMIZ1 (via SP-RING-type domain); in the TGF-beta signaling pathway increases the activity of the SMAD3/SMAD4 transcriptional complex. Interacts (via N-terminus) with TSC22D1. Post-translationally, phosphorylated by PDPK1. In terms of processing, monoubiquitinated on Lys-519 by E3 ubiquitin-protein ligase TRIM33. Monoubiquitination hampers its ability to form a stable complex with activated SMAD2/3 resulting in inhibition of TGF-beta/BMP signaling cascade. Deubiquitination by USP9X restores its competence to mediate TGF-beta signaling.

It is found in the cytoplasm. The protein resides in the nucleus. Functionally, in muscle physiology, plays a central role in the balance between atrophy and hypertrophy. When recruited by MSTN, promotes atrophy response via phosphorylated SMAD2/4. MSTN decrease causes SMAD4 release and subsequent recruitment by the BMP pathway to promote hypertrophy via phosphorylated SMAD1/5/8. Acts synergistically with SMAD1 and YY1 in bone morphogenetic protein (BMP)-mediated cardiac-specific gene expression. Binds to SMAD binding elements (SBEs) (5'-GTCT/AGAC-3') within BMP response element (BMPRE) of cardiac activating regions. Common SMAD (co-SMAD) is the coactivator and mediator of signal transduction by TGF-beta (transforming growth factor). Component of the heterotrimeric SMAD2/SMAD3-SMAD4 complex that forms in the nucleus and is required for the TGF-mediated signaling. Promotes binding of the SMAD2/SMAD4/FAST-1 complex to DNA and provides an activation function required for SMAD1 or SMAD2 to stimulate transcription. Component of the multimeric SMAD3/SMAD4/JUN/FOS complex which forms at the AP1 promoter site; required for synergistic transcriptional activity in response to TGF-beta. May act as a tumor suppressor. Positively regulates PDPK1 kinase activity by stimulating its dissociation from the 14-3-3 protein YWHAQ which acts as a negative regulator. The protein is Mothers against decapentaplegic homolog 4 (SMAD4) of Homo sapiens (Human).